The primary structure comprises 275 residues: Large ribosomal subunit protein uL2 (275 aa).

Polar residues predominate over residues 35–49; the sequence is DSQSSTAGRNNNGRI. 2 disordered regions span residues 35–59 and 224–275; these read DSQSSTAGRNNNGRITTRHKGGGHK and AMNP…RHKR. Basic residues predominate over residues 50–59; that stretch reads TTRHKGGGHK.

Belongs to the universal ribosomal protein uL2 family. Part of the 50S ribosomal subunit. Forms a bridge to the 30S subunit in the 70S ribosome.

One of the primary rRNA binding proteins. Required for association of the 30S and 50S subunits to form the 70S ribosome, for tRNA binding and peptide bond formation. It has been suggested to have peptidyltransferase activity; this is somewhat controversial. Makes several contacts with the 16S rRNA in the 70S ribosome. The chain is Large ribosomal subunit protein uL2 from Burkholderia cenocepacia (strain HI2424).